Here is a 64-residue protein sequence, read N- to C-terminus: DNA-directed RNA polymerase subunit Rpo10 (64 aa).

Zn(2+)-binding residues include Cys-7, Cys-10, Cys-45, and Cys-46.

This sequence belongs to the archaeal Rpo10/eukaryotic RPB10 RNA polymerase subunit family. In terms of assembly, part of the RNA polymerase complex. Requires Zn(2+) as cofactor.

It is found in the cytoplasm. It catalyses the reaction RNA(n) + a ribonucleoside 5'-triphosphate = RNA(n+1) + diphosphate. Functionally, DNA-dependent RNA polymerase (RNAP) catalyzes the transcription of DNA into RNA using the four ribonucleoside triphosphates as substrates. This Haloquadratum walsbyi (strain DSM 16790 / HBSQ001) protein is DNA-directed RNA polymerase subunit Rpo10.